A 148-amino-acid polypeptide reads, in one-letter code: Small ribosomal subunit protein bS16 (148 aa).

The span at alanine 111–threonine 122 shows a compositional bias: low complexity. The segment at alanine 111–alanine 148 is disordered. A compositionally biased stretch (basic and acidic residues) spans lysine 130–alanine 148.

Belongs to the bacterial ribosomal protein bS16 family.

This chain is Small ribosomal subunit protein bS16, found in Saccharopolyspora erythraea (strain ATCC 11635 / DSM 40517 / JCM 4748 / NBRC 13426 / NCIMB 8594 / NRRL 2338).